The following is a 196-amino-acid chain: Putative HTH-type transcriptional regulator in exeN 3'region (196 aa).

The HTH luxR-type domain occupies 120–185 (ASVGGDRLTR…ELFNLFLNHL (66 aa)). The segment at residues 144–163 (TEAIAAALGIGNGTVKNHRK) is a DNA-binding region (H-T-H motif).

The chain is Putative HTH-type transcriptional regulator in exeN 3'region from Aeromonas salmonicida.